A 301-amino-acid chain; its full sequence is MAEITLEPSDLMAQTNKRIVPKFTEIFPVEDANYPYSAFIASVRKDVIKHCTDHKGIFQPVLPPEKKVPELWFYTELKTRTSSITLAIRMDNLYLVGFRTPGGVWWEFGKDGDTHLLGDNPRWLGFGGRYQDLIGNKGLETVTMGRAEMTRAVNDLAKKKKMATLEEEEVKMQMQMPEAADLAAAAAADPQADTKSKLVKLVVMVCEGLRFNTVSRTVDAGFNSQHGVTLTVTQGKQVQKWDRISKAAFEWADHPTAVIPDMQKLGIKDKNEAARIVALVKNQTTAAAATAASADNDDDEA.

The propeptide at 1-16 is or 12 (in 10% of the molecules); sequence MAEITLEPSDLMAQTN. The propeptide occupies 162–186; the sequence is MATLEEEEVKMQMQMPEAADLAAAA. The active site involves glutamate 207. Positions 258 to 301 are excised as a propeptide; it reads VIPDMQKLGIKDKNEAARIVALVKNQTTAAAATAASADNDDDEA.

It belongs to the ribosome-inactivating protein family. Type 1 RIP subfamily. In terms of assembly, synthesized and stored in the kernel as a 34 kDa inactive precursor. During germination, this neutral precursor is converted into a basic, active form by limited proteolysis, which removes 25 AA of net charge -6 from the center of the polypeptide chain. Additional processing also occurs at the N- and C-termini of the polypeptide. A two-chain active RIP (comprised of 16.5 and 8.5 kDa fragments that remain tightly associated) is produced from this processing event.

The catalysed reaction is Endohydrolysis of the N-glycosidic bond at one specific adenosine on the 28S rRNA.. Its function is as follows. Potent catalytic inactivator of eukaryotic protein synthesis. It may be a component of natural defense mechanisms involved in protecting the kernel against soil-borne fungal infections. The sequence is that of Ribosome-inactivating protein from Zea mays (Maize).